Reading from the N-terminus, the 467-residue chain is Light-independent protochlorophyllide reductase subunit N (467 aa).

Residues cysteine 23, cysteine 48, and cysteine 108 each coordinate [4Fe-4S] cluster.

This sequence belongs to the BchN/ChlN family. In terms of assembly, protochlorophyllide reductase is composed of three subunits; ChlL, ChlN and ChlB. Forms a heterotetramer of two ChlB and two ChlN subunits. Requires [4Fe-4S] cluster as cofactor.

The enzyme catalyses chlorophyllide a + oxidized 2[4Fe-4S]-[ferredoxin] + 2 ADP + 2 phosphate = protochlorophyllide a + reduced 2[4Fe-4S]-[ferredoxin] + 2 ATP + 2 H2O. It participates in porphyrin-containing compound metabolism; chlorophyll biosynthesis (light-independent). Component of the dark-operative protochlorophyllide reductase (DPOR) that uses Mg-ATP and reduced ferredoxin to reduce ring D of protochlorophyllide (Pchlide) to form chlorophyllide a (Chlide). This reaction is light-independent. The NB-protein (ChlN-ChlB) is the catalytic component of the complex. The protein is Light-independent protochlorophyllide reductase subunit N of Nostoc sp. (strain PCC 7120 / SAG 25.82 / UTEX 2576).